The primary structure comprises 52 residues: MAGNRSIITLECKTCKERNYTTTKNKKKTQDKLTLSKYCPRCRKHVEHKETK.

This sequence belongs to the bacterial ribosomal protein bL33 family.

This chain is Large ribosomal subunit protein bL33, found in Anaeromyxobacter dehalogenans (strain 2CP-C).